Reading from the N-terminus, the 274-residue chain is Purine nucleoside phosphorylase 1 (274 aa).

Phosphate is bound by residues Ser-29, His-60, 80–82 (RFH), and Ala-112. Ser-29 bears the Phosphoserine mark. Residue Glu-192 coordinates a purine D-ribonucleoside. Ser-211 serves as a coordination point for phosphate. Asn-234 contributes to the a purine D-ribonucleoside binding site.

The protein belongs to the PNP/MTAP phosphorylase family. In terms of assembly, homotrimer.

The enzyme catalyses a purine D-ribonucleoside + phosphate = a purine nucleobase + alpha-D-ribose 1-phosphate. It carries out the reaction a purine 2'-deoxy-D-ribonucleoside + phosphate = a purine nucleobase + 2-deoxy-alpha-D-ribose 1-phosphate. It participates in purine metabolism; purine nucleoside salvage. Functionally, the purine nucleoside phosphorylases catalyze the phosphorolytic breakdown of the N-glycosidic bond in the beta-(deoxy)ribonucleoside molecules, with the formation of the corresponding free purine bases and pentose-1-phosphate. Cleaves guanosine, inosine, 2'-deoxyguanosine and 2'-deoxyinosine. This Geobacillus stearothermophilus (Bacillus stearothermophilus) protein is Purine nucleoside phosphorylase 1 (punA).